Here is a 352-residue protein sequence, read N- to C-terminus: 3'(2'),5'-bisphosphate nucleotidase (352 aa).

Residue D45 is the Proton acceptor of the active site. E68, D133, I135, and D136 together coordinate Mg(2+). The active-site Proton acceptor is T138. Residues T138, H240, S264, K267, R281, and D294 each coordinate adenosine 3',5'-bisphosphate. The AMP site is built by H240, S264, K267, R281, and D294. D294 contacts Mg(2+).

Belongs to the inositol monophosphatase superfamily. Mg(2+) serves as cofactor.

The catalysed reaction is 3'-phosphoadenylyl sulfate + H2O = adenosine 5'-phosphosulfate + phosphate. It carries out the reaction adenosine 3',5'-bisphosphate + H2O = AMP + phosphate. The enzyme catalyses adenosine 2',5'-bisphosphate + H2O = AMP + phosphate. Phosphatase that converts adenosine 3'-phosphate 5'-phosphosulfate (PAPS) to adenosine 5'-phosphosulfate (APS) and 3'(2')-phosphoadenosine 5'-phosphate (PAP) to AMP. May regulate the flux of sulfur in the sulfur-activation pathway by converting PAPS to APS. Involved in osmoadaptation. This chain is 3'(2'),5'-bisphosphate nucleotidase, found in Emericella nidulans (strain FGSC A4 / ATCC 38163 / CBS 112.46 / NRRL 194 / M139) (Aspergillus nidulans).